Here is a 209-residue protein sequence, read N- to C-terminus: FMN-dependent NADH:quinone oxidoreductase (209 aa).

Residues Ser9 and 15 to 17 (SNS) contribute to the FMN site.

The protein belongs to the azoreductase type 1 family. As to quaternary structure, homodimer. The cofactor is FMN.

It carries out the reaction 2 a quinone + NADH + H(+) = 2 a 1,4-benzosemiquinone + NAD(+). It catalyses the reaction N,N-dimethyl-1,4-phenylenediamine + anthranilate + 2 NAD(+) = 2-(4-dimethylaminophenyl)diazenylbenzoate + 2 NADH + 2 H(+). Functionally, quinone reductase that provides resistance to thiol-specific stress caused by electrophilic quinones. Also exhibits azoreductase activity. Catalyzes the reductive cleavage of the azo bond in aromatic azo compounds to the corresponding amines. The protein is FMN-dependent NADH:quinone oxidoreductase of Bordetella parapertussis (strain 12822 / ATCC BAA-587 / NCTC 13253).